The sequence spans 289 residues: Bidirectional sugar transporter SWEET15 (289 aa).

The Extracellular portion of the chain corresponds to 1-10; the sequence is MAMAMANHHT. The helical transmembrane segment at 11–31 threads the bilayer; the sequence is LGLIFGILGNIISFLVYFAPA. The 87-residue stretch at 14-100 folds into the MtN3/slv 1 domain; the sequence is IFGILGNIIS…LYFFYAPMQA (87 aa). Topologically, residues 32 to 45 are cytoplasmic; sequence PTFYRIYKRKSAEG. The helical transmembrane segment at 46–66 threads the bilayer; the sequence is FHSLPYIVALFSAMLWLYYAL. The Extracellular portion of the chain corresponds to 67–70; it reads LKKD. The chain crosses the membrane as a helical span at residues 71 to 91; the sequence is AFLLITINSFGCAIESFYILL. Residues 92 to 106 are Cytoplasmic-facing; sequence YFFYAPMQAKKQTLK. Residues 107 to 127 form a helical membrane-spanning segment; the sequence is VVISLNVGVFSILVVLIQFLL. The Extracellular portion of the chain corresponds to 128–134; sequence KGSNRIN. Residues 135 to 155 traverse the membrane as a helical segment; the sequence is VFGWICASFSVAVFAAPLSIV. The MtN3/slv 2 domain maps to 136-219; sequence FGWICASFSV…VLYGFYRNAG (84 aa). The Cytoplasmic segment spans residues 156 to 167; the sequence is AKVIRTKSVEFM. Residues 168–188 traverse the membrane as a helical segment; that stretch reads PFSLSFFLTLSAIMWFAYGLL. At 189–193 the chain is on the extracellular side; it reads KNDPC. A helical transmembrane segment spans residues 194–214; sequence VAIPNILGVILGLVQMVLYGF. The Cytoplasmic segment spans residues 215-289; it reads YRNAGKEKME…GELQPNGSTV (75 aa). Positions 249-289 are disordered; the sequence is GAQQNGIKKSGSEDVKDDEETGNREKSTENSGELQPNGSTV. The segment covering 277–289 has biased composition (polar residues); it reads ENSGELQPNGSTV.

The protein belongs to the SWEET sugar transporter family. Forms homooligomers and/or heterooligomers.

It is found in the cell membrane. In terms of biological role, mediates both low-affinity uptake and efflux of sugar across the plasma membrane. This Vitis vinifera (Grape) protein is Bidirectional sugar transporter SWEET15.